Reading from the N-terminus, the 242-residue chain is ATP synthase subunit a (242 aa).

A run of 5 helical transmembrane segments spans residues 28–48 (LHGQ…LLVV), 89–109 (LPFV…GALI), 128–148 (INTT…AGLS), 193–213 (LVVA…AMFL), and 214–234 (GLFT…NYIG).

The protein belongs to the ATPase A chain family. As to quaternary structure, F-type ATPases have 2 components, CF(1) - the catalytic core - and CF(0) - the membrane proton channel. CF(1) has five subunits: alpha(3), beta(3), gamma(1), delta(1), epsilon(1). CF(0) has four main subunits: a, b, b' and c.

The protein localises to the cellular thylakoid membrane. Key component of the proton channel; it plays a direct role in the translocation of protons across the membrane. The polypeptide is ATP synthase subunit a (Synechococcus sp. (strain WH7803)).